The sequence spans 351 residues: Large ribosomal subunit protein uL3 (351 aa).

Disordered stretches follow at residues 1 to 31 (MGHR…TPRT) and 246 to 271 (KGSR…GQLG).

The protein belongs to the universal ribosomal protein uL3 family. Part of the 50S ribosomal subunit. Forms a cluster with proteins L14 and L24e.

In terms of biological role, one of the primary rRNA binding proteins, it binds directly near the 3'-end of the 23S rRNA, where it nucleates assembly of the 50S subunit. The polypeptide is Large ribosomal subunit protein uL3 (Saccharolobus solfataricus (strain ATCC 35092 / DSM 1617 / JCM 11322 / P2) (Sulfolobus solfataricus)).